A 279-amino-acid chain; its full sequence is Acyl-[acyl-carrier-protein]--UDP-N-acetylglucosamine O-acyltransferase (279 aa).

Belongs to the transferase hexapeptide repeat family. LpxA subfamily. Homotrimer.

It is found in the cytoplasm. It carries out the reaction a (3R)-hydroxyacyl-[ACP] + UDP-N-acetyl-alpha-D-glucosamine = a UDP-3-O-[(3R)-3-hydroxyacyl]-N-acetyl-alpha-D-glucosamine + holo-[ACP]. Its pathway is glycolipid biosynthesis; lipid IV(A) biosynthesis; lipid IV(A) from (3R)-3-hydroxytetradecanoyl-[acyl-carrier-protein] and UDP-N-acetyl-alpha-D-glucosamine: step 1/6. In terms of biological role, involved in the biosynthesis of lipid A, a phosphorylated glycolipid that anchors the lipopolysaccharide to the outer membrane of the cell. This is Acyl-[acyl-carrier-protein]--UDP-N-acetylglucosamine O-acyltransferase from Chlamydia pneumoniae (Chlamydophila pneumoniae).